Consider the following 393-residue polypeptide: Glutamate 5-kinase (393 aa).

Lys17 is a binding site for ATP. The substrate site is built by Ser57, Asp144, and Asn156. 176 to 177 (SD) lines the ATP pocket. The PUA domain occupies 282 to 359 (AGSIAIDAGA…AEIAAILGYA (78 aa)). The tract at residues 374-393 (APSGARSEEGGNEKKGKLHA) is disordered. Residues 379–393 (RSEEGGNEKKGKLHA) show a composition bias toward basic and acidic residues.

The protein belongs to the glutamate 5-kinase family.

It is found in the cytoplasm. It catalyses the reaction L-glutamate + ATP = L-glutamyl 5-phosphate + ADP. It participates in amino-acid biosynthesis; L-proline biosynthesis; L-glutamate 5-semialdehyde from L-glutamate: step 1/2. Functionally, catalyzes the transfer of a phosphate group to glutamate to form L-glutamate 5-phosphate. This Sinorhizobium fredii (strain NBRC 101917 / NGR234) protein is Glutamate 5-kinase.